Reading from the N-terminus, the 351-residue chain is Large ribosomal subunit protein uL3 (351 aa).

Disordered regions lie at residues 1-31 and 246-271; these read MGHR…TPRT and KGSR…GQLG.

This sequence belongs to the universal ribosomal protein uL3 family. As to quaternary structure, part of the 50S ribosomal subunit. Forms a cluster with proteins L14 and L24e.

One of the primary rRNA binding proteins, it binds directly near the 3'-end of the 23S rRNA, where it nucleates assembly of the 50S subunit. This chain is Large ribosomal subunit protein uL3, found in Saccharolobus solfataricus (strain ATCC 35092 / DSM 1617 / JCM 11322 / P2) (Sulfolobus solfataricus).